A 586-amino-acid polypeptide reads, in one-letter code: A-type ATP synthase subunit A (586 aa).

238-245 (GPFGSGKT) contributes to the ATP binding site.

This sequence belongs to the ATPase alpha/beta chains family. Has multiple subunits with at least A(3), B(3), C, D, E, F, H, I and proteolipid K(x).

The protein localises to the cell membrane. The enzyme catalyses ATP + H2O + 4 H(+)(in) = ADP + phosphate + 5 H(+)(out). Functionally, component of the A-type ATP synthase that produces ATP from ADP in the presence of a proton gradient across the membrane. The A chain is the catalytic subunit. This chain is A-type ATP synthase subunit A, found in Haloferax volcanii (strain ATCC 29605 / DSM 3757 / JCM 8879 / NBRC 14742 / NCIMB 2012 / VKM B-1768 / DS2) (Halobacterium volcanii).